The following is a 25-amino-acid chain: Flagellar filament core protein flaB1 (25 aa).

This sequence belongs to the bacterial flagellin family. In terms of assembly, the flagellum consists of an outer layer composed of two sheath proteins, flaA1 (44 kDa) and flaA2 (35 kDa) around a core that contains three proteins flaB1 (37 kDa), flaB2 (34 kDa) and flaB3 (32 kDa).

It is found in the periplasmic flagellum. It localises to the periplasm. Functionally, component of the core of the flagella. This Brachyspira hyodysenteriae (Treponema hyodysenteriae) protein is Flagellar filament core protein flaB1 (flaB1).